The following is a 375-amino-acid chain: Probable sugar phosphate/phosphate translocator At3g17430 (375 aa).

10 helical membrane passes run 9–29, 43–63, 76–96, 106–126, 140–160, 163–183, 193–213, 229–249, 257–276, and 280–302; these read LVLT…VILY, LPIT…FLLI, FEIY…SLWF, VAFI…MAVV, MLLV…FNIV, VYQV…QVLL, ITSL…PWYV, WIFF…FLVI, IRVA…TVIF, and TITG…YNYI. The disordered stretch occupies residues 328-348; that stretch reads EKKSSDKFNPNDSVEIPRVGG.

It belongs to the TPT transporter family. TPT (TC 2.A.7.9) subfamily.

The protein localises to the membrane. The protein is Probable sugar phosphate/phosphate translocator At3g17430 of Arabidopsis thaliana (Mouse-ear cress).